The primary structure comprises 131 residues: MIHGIGTDLLDARRIRAGLARYGEHYADRILAPAEHTRYYASRDPAGFLAKCFAAKEAFAKALGTGLRAPVTLRNIAVMRDAHGKPHIDCAPELTAFLRERGVTAQHVSLSDEGDFVLAFVVLEQSATQED.

Asp-8 and Glu-57 together coordinate Mg(2+).

It belongs to the P-Pant transferase superfamily. AcpS family. Requires Mg(2+) as cofactor.

Its subcellular location is the cytoplasm. The catalysed reaction is apo-[ACP] + CoA = holo-[ACP] + adenosine 3',5'-bisphosphate + H(+). Transfers the 4'-phosphopantetheine moiety from coenzyme A to a Ser of acyl-carrier-protein. In Thiobacillus denitrificans (strain ATCC 25259 / T1), this protein is Holo-[acyl-carrier-protein] synthase.